The sequence spans 154 residues: Ribosome maturation factor RimP (154 aa).

Belongs to the RimP family.

The protein localises to the cytoplasm. Its function is as follows. Required for maturation of 30S ribosomal subunits. The protein is Ribosome maturation factor RimP of Prochlorococcus marinus (strain MIT 9313).